The sequence spans 121 residues: Phosphoribosyl-ATP pyrophosphatase (121 aa).

The protein belongs to the PRA-PH family.

It is found in the cytoplasm. It carries out the reaction 1-(5-phospho-beta-D-ribosyl)-ATP + H2O = 1-(5-phospho-beta-D-ribosyl)-5'-AMP + diphosphate + H(+). The protein operates within amino-acid biosynthesis; L-histidine biosynthesis; L-histidine from 5-phospho-alpha-D-ribose 1-diphosphate: step 2/9. The sequence is that of Phosphoribosyl-ATP pyrophosphatase from Burkholderia vietnamiensis (strain G4 / LMG 22486) (Burkholderia cepacia (strain R1808)).